The sequence spans 263 residues: Ribosomal RNA small subunit methyltransferase A (263 aa).

S-adenosyl-L-methionine contacts are provided by His-13, Leu-15, Gly-40, Glu-61, Asp-86, and Asn-105.

It belongs to the class I-like SAM-binding methyltransferase superfamily. rRNA adenine N(6)-methyltransferase family. RsmA subfamily.

Its subcellular location is the cytoplasm. It catalyses the reaction adenosine(1518)/adenosine(1519) in 16S rRNA + 4 S-adenosyl-L-methionine = N(6)-dimethyladenosine(1518)/N(6)-dimethyladenosine(1519) in 16S rRNA + 4 S-adenosyl-L-homocysteine + 4 H(+). Its function is as follows. Specifically dimethylates two adjacent adenosines (A1518 and A1519) in the loop of a conserved hairpin near the 3'-end of 16S rRNA in the 30S particle. May play a critical role in biogenesis of 30S subunits. This Dichelobacter nodosus (strain VCS1703A) protein is Ribosomal RNA small subunit methyltransferase A.